The primary structure comprises 579 residues: MKMILVRRFRVLILVVFLLACALHIAVDLLPKLDRRATRSSGEPGCSCAQPAAEAAGPGWAQARSRPGESAGGDAGWPNKHTLRILQDFSSDPASNLTSHSLEKLPSAAEPVDHAPRGQEPRSPPPRDPAHRPLLRDPGPRPRVPPPGPSGDGSLLAKLFEHPLYQGAVPPLTEDDVLFNVNSDIRFNPKAAENPDWPHEGAEGAEFLPTGEAAVNLYPNWLKFHIGINRYELYSRHNPAIDALLRDLGSQKITSVAMKSGGTQLKLIMTFQNYGQALFKPMKQTREQETPPDFFYFSDYERHNAEIAAFHLDRILDFRRVPPVAGRMINMTKEIRDVTRDKKLWRTFFVSPANNICFYGECSYYCSTEHALCGRPDQIEGSLAAFLPDLSLAKRKTWRNPWRRSYHKRKKAEWEVDPDYCEEVKQTPPYDSGHRILDIMDMTVFDFLMGNMDRHHYETFEKFGNETFIIHLDNGRGFGKYSHDELSILAPLHQCCRIRRSTYLRLQLLAKEEHKLSLLMAESLQHDKVAPVLYQLHLEALDRRLRIVLQAVRDCVEKDGLSSVVEDDLATEHRASTER.

Residues 1-10 (MKMILVRRFR) lie on the Cytoplasmic side of the membrane. Positions 1–87 (MKMILVRRFR…PNKHTLRILQ (87 aa)) are excised as a propeptide. The helical; Signal-anchor for type II membrane protein transmembrane segment at 11–31 (VLILVVFLLACALHIAVDLLP) threads the bilayer. Residues 32 to 579 (KLDRRATRSS…ATEHRASTER (548 aa)) are Lumenal-facing. A disordered region spans residues 38–79 (TRSSGEPGCSCAQPAAEAAGPGWAQARSRPGESAGGDAGWPN). The segment covering 49–63 (AQPAAEAAGPGWAQA) has biased composition (low complexity). An N-linked (GlcNAc...) asparagine glycan is attached at Asn96. The segment at 104–155 (KLPSAAEPVDHAPRGQEPRSPPPRDPAHRPLLRDPGPRPRVPPPGPSGDGSL) is disordered. Basic and acidic residues-rich tracts occupy residues 111–120 (PVDHAPRGQE) and 128–140 (DPAHRPLLRDPGP). Residues Gln264, Lys280, and Glu301 each coordinate ATP. Glu301 contributes to the Mn(2+) binding site. The tract at residues 349–560 (FVSPANNICF…AVRDCVEKDG (212 aa)) is kinase domain. Cystine bridges form between Cys357–Cys373 and Cys362–Cys366. An ATP-binding site is contributed by 384–387 (AAFL). Disulfide bonds link Cys421-Cys495 and Cys496-Cys555. The active site involves Asp453. ATP is bound by residues Glu458 and Asp473. Asp473 contacts Mn(2+).

The protein belongs to the FAM20 family. In terms of assembly, homodimer; disulfide-linked. Interacts with FAM20A; probably forming a heterotetramer of 2 subunits of FAM20A and 2 subunits of FAM20C. Interacts with COPII components SEC23A and SEC24A; transport of FAM20C from the endoplasmic reticulum to the Golgi is likely to be mediated by COPII vesicles. Requires Mn(2+) as cofactor. N-glycosylation is required for folding. In terms of processing, autophosphorylated. Post-translationally, propeptide cleavage by MBTPS1/S1P promotes FAM20C secretion and maximal kinase activity which is essential for efficient osteoblast differentiation and biomineralization. As to expression, in the mammary gland, expressed at higher levels in lactating mice than in virgin mice (at protein level). Highly expressed in the tooth. No expression in the dental pulp. At the secretory stage of amelogenesis, it is detected in the matrix of the enamel, in the ameloblasts, and within the cells adjoining the stratum intermedium (a tissue layer analogous to the stellate reticulum seen in the developing molar). Strong expression is observed in maturation stage ameloblasts and throughout the non-cornified layers of the gingival epithelium. Expressed at moderate levels in bone and at low levels in kidney, liver, brain and lung. Very low expression, if any, in spleen and skeletal muscle.

Its subcellular location is the golgi apparatus membrane. It is found in the secreted. The protein resides in the endoplasmic reticulum. It catalyses the reaction L-seryl-[protein] + ATP = O-phospho-L-seryl-[protein] + ADP + H(+). It carries out the reaction L-threonyl-[protein] + ATP = O-phospho-L-threonyl-[protein] + ADP + H(+). Serine/threonine protein kinase activity is increased upon interaction with FAM20A. Functionally, golgi serine/threonine protein kinase that phosphorylates secretory pathway proteins within Ser-x-Glu/pSer motifs and plays a key role in biomineralization of bones and teeth. Constitutes the main protein kinase for extracellular proteins, generating the majority of the extracellular phosphoproteome. Mainly phosphorylates proteins within the Ser-x-Glu/pSer motif, but also displays a broader substrate specificity. Phosphorylates ERO1A, enhancing its activity which is required to maintain endoplasmic reticulum redox homeostasis and for oxidative protein folding. During endoplasmic reticulum stress, phosphorylates P4HB/PDIA1 which induces a functional switch, causing P4HB to change from an oxidoreductase to a molecular chaperone. This is critical to maintain ER proteostasis and reduce cell death under ER stress. Phosphorylation of P4HB also promotes its interaction with ERN1, leading to reduced activity of ERN1, a key sensor for the endoplasmic reticulum unfolded protein response. Required for osteoblast differentiation and mineralization. Phosphorylates casein as well as a number of proteins involved in biomineralization such as AMELX, AMTN, ENAM and SPP1. In addition to its role in biomineralization, also plays a role in lipid homeostasis, wound healing and cell migration and adhesion. In Mus musculus (Mouse), this protein is Extracellular serine/threonine protein kinase FAM20C.